Consider the following 381-residue polypeptide: Selenoprotein P (381 aa).

Positions 1 to 19 (MWRSLGLALALCLLPLGGT) are cleaved as a signal peptide. An N-linked (GlcNAc...) asparagine glycan is attached at Asn-46. Sec-59 is a non-standard amino acid (selenocysteine). 3 N-linked (GlcNAc...) asparagine glycosylation sites follow: Asn-83, Asn-119, and Asn-128. The interval 202-268 (SPHYHHEHHH…ENRDMPGSED (67 aa)) is disordered. The segment covering 204–217 (HYHHEHHHNHRHQH) has biased composition (basic residues). Residues 218-229 (LGSSELSENQQP) are compositionally biased toward polar residues. Basic residues predominate over residues 243-255 (LHHHHKHKGQHRQ). Ser-266 carries the phosphoserine modification. Non-standard amino acids (selenocysteine) are located at Sec-318 and Sec-330. Asn-338 is a glycosylation site (N-linked (GlcNAc...) asparagine). Non-standard amino acids (selenocysteine) are located at Sec-345, Sec-352, Sec-367, Sec-369, Sec-376, and Sec-378. The segment at 352 to 381 (UQISQQLIPTEASTSURUKNQAKKUEUPSN) is disordered. A compositionally biased stretch (polar residues) spans 353 to 369 (QISQQLIPTEASTSURU).

This sequence belongs to the selenoprotein P family. Post-translationally, phosphorylation sites are present in the extracellular medium.

The protein localises to the secreted. In terms of biological role, might be responsible for some of the extracellular antioxidant defense properties of selenium or might be involved in the transport of selenium. May supply selenium to tissues such as brain and testis. This is Selenoprotein P from Pongo abelii (Sumatran orangutan).